Here is a 578-residue protein sequence, read N- to C-terminus: Proline--tRNA ligase (578 aa).

Belongs to the class-II aminoacyl-tRNA synthetase family. ProS type 1 subfamily. Homodimer.

It is found in the cytoplasm. The enzyme catalyses tRNA(Pro) + L-proline + ATP = L-prolyl-tRNA(Pro) + AMP + diphosphate. Catalyzes the attachment of proline to tRNA(Pro) in a two-step reaction: proline is first activated by ATP to form Pro-AMP and then transferred to the acceptor end of tRNA(Pro). As ProRS can inadvertently accommodate and process non-cognate amino acids such as alanine and cysteine, to avoid such errors it has two additional distinct editing activities against alanine. One activity is designated as 'pretransfer' editing and involves the tRNA(Pro)-independent hydrolysis of activated Ala-AMP. The other activity is designated 'posttransfer' editing and involves deacylation of mischarged Ala-tRNA(Pro). The misacylated Cys-tRNA(Pro) is not edited by ProRS. The chain is Proline--tRNA ligase from Burkholderia pseudomallei (strain K96243).